The chain runs to 66 residues: Gallinacin-5 (66 aa).

An N-terminal signal peptide occupies residues 1 to 19; that stretch reads MQILTLLFAVLLLMLRAEP. A propeptide spanning residues 20 to 25 is cleaved from the precursor; sequence GLSLAR. Disulfide bonds link Cys-31–Cys-59, Cys-38–Cys-53, and Cys-43–Cys-60.

The protein belongs to the beta-defensin family. In terms of tissue distribution, strong expression in the tongue and bone marrow. Low expression in the esophagus, trachea, lung, brain and ovary. Expressed in the ovarian stroma, but not in the ovarian follicles.

It is found in the secreted. It localises to the cytoplasmic granule. Has bactericidal activity. This Gallus gallus (Chicken) protein is Gallinacin-5 (GAL5).